We begin with the raw amino-acid sequence, 119 residues long: Ribonuclease P protein component (119 aa).

Belongs to the RnpA family. As to quaternary structure, consists of a catalytic RNA component (M1 or rnpB) and a protein subunit.

It catalyses the reaction Endonucleolytic cleavage of RNA, removing 5'-extranucleotides from tRNA precursor.. RNaseP catalyzes the removal of the 5'-leader sequence from pre-tRNA to produce the mature 5'-terminus. It can also cleave other RNA substrates such as 4.5S RNA. The protein component plays an auxiliary but essential role in vivo by binding to the 5'-leader sequence and broadening the substrate specificity of the ribozyme. The protein is Ribonuclease P protein component of Streptococcus gordonii (strain Challis / ATCC 35105 / BCRC 15272 / CH1 / DL1 / V288).